Consider the following 127-residue polypeptide: Thioredoxin (127 aa).

The region spanning 2-115 is the Thioredoxin domain; the sequence is SDGVKHINSA…LRAAAEKMGR (114 aa). Catalysis depends on nucleophile residues Cys-33 and Cys-36. The cysteines at positions 33 and 36 are disulfide-linked.

It belongs to the thioredoxin family.

Functionally, participates in various redox reactions through the reversible oxidation of its active center dithiol to a disulfide and catalyzes dithiol-disulfide exchange reactions. The sequence is that of Thioredoxin (trx) from Neurospora crassa (strain ATCC 24698 / 74-OR23-1A / CBS 708.71 / DSM 1257 / FGSC 987).